The primary structure comprises 275 residues: Hydroxyethylthiazole kinase (275 aa).

Substrate is bound at residue M57. ATP is bound by residues R132 and S178. Substrate is bound at residue G205.

This sequence belongs to the Thz kinase family. It depends on Mg(2+) as a cofactor.

It carries out the reaction 5-(2-hydroxyethyl)-4-methylthiazole + ATP = 4-methyl-5-(2-phosphooxyethyl)-thiazole + ADP + H(+). It functions in the pathway cofactor biosynthesis; thiamine diphosphate biosynthesis; 4-methyl-5-(2-phosphoethyl)-thiazole from 5-(2-hydroxyethyl)-4-methylthiazole: step 1/1. Catalyzes the phosphorylation of the hydroxyl group of 4-methyl-5-beta-hydroxyethylthiazole (THZ). This Clavibacter sepedonicus (Clavibacter michiganensis subsp. sepedonicus) protein is Hydroxyethylthiazole kinase.